The primary structure comprises 259 residues: Enolase-phosphatase E1 (259 aa).

Positions 16 and 18 each coordinate Mg(2+). Substrate contacts are provided by residues 151–152 (SS) and lysine 185. Aspartate 210 contributes to the Mg(2+) binding site.

Belongs to the HAD-like hydrolase superfamily. MasA/MtnC family. As to quaternary structure, monomer. Mg(2+) is required as a cofactor.

The protein localises to the cytoplasm. It localises to the nucleus. The catalysed reaction is 5-methylsulfanyl-2,3-dioxopentyl phosphate + H2O = 1,2-dihydroxy-5-(methylsulfanyl)pent-1-en-3-one + phosphate. Its pathway is amino-acid biosynthesis; L-methionine biosynthesis via salvage pathway; L-methionine from S-methyl-5-thio-alpha-D-ribose 1-phosphate: step 3/6. It functions in the pathway amino-acid biosynthesis; L-methionine biosynthesis via salvage pathway; L-methionine from S-methyl-5-thio-alpha-D-ribose 1-phosphate: step 4/6. In terms of biological role, bifunctional enzyme that catalyzes the enolization of 2,3-diketo-5-methylthiopentyl-1-phosphate (DK-MTP-1-P) into the intermediate 2-hydroxy-3-keto-5-methylthiopentenyl-1-phosphate (HK-MTPenyl-1-P), which is then dephosphorylated to form the acireductone 1,2-dihydroxy-3-keto-5-methylthiopentene (DHK-MTPene). This is Enolase-phosphatase E1 (enoph1) from Xenopus tropicalis (Western clawed frog).